A 396-amino-acid polypeptide reads, in one-letter code: Na(+)/H(+) antiporter NhaA 1 (396 aa).

11 consecutive transmembrane segments (helical) span residues 15–35, 60–80, 96–116, 126–146, 155–175, 179–199, 207–227, 255–275, 290–312, 329–349, and 363–383; these read AGIF…VGFL, LEFW…GLEL, FLPS…FAVI, GWAI…ALLG, IFVL…IALF, ALNF…LVMC, IPFV…GIHA, SLGY…NAGV, PLGV…SWFL, LYAV…VDNL, and LAIL…AKAV.

This sequence belongs to the NhaA Na(+)/H(+) (TC 2.A.33) antiporter family.

The protein resides in the cell inner membrane. The catalysed reaction is Na(+)(in) + 2 H(+)(out) = Na(+)(out) + 2 H(+)(in). Na(+)/H(+) antiporter that extrudes sodium in exchange for external protons. The chain is Na(+)/H(+) antiporter NhaA 1 from Campylobacter hominis (strain ATCC BAA-381 / DSM 21671 / CCUG 45161 / LMG 19568 / NCTC 13146 / CH001A).